A 253-amino-acid polypeptide reads, in one-letter code: Phycoerythrobilin:ferredoxin oxidoreductase (253 aa).

The protein belongs to the HY2 family.

The catalysed reaction is (3Z)-phycoerythrobilin + oxidized 2[4Fe-4S]-[ferredoxin] = 15,16-dihydrobiliverdin + reduced 2[4Fe-4S]-[ferredoxin] + 2 H(+). In terms of biological role, catalyzes the two-electron reduction of the C2 and C3(1) diene system of 15,16-dihydrobiliverdin. The polypeptide is Phycoerythrobilin:ferredoxin oxidoreductase (Prochlorococcus marinus (strain AS9601)).